A 98-amino-acid polypeptide reads, in one-letter code: Large ribosomal subunit protein uL23 (98 aa).

This sequence belongs to the universal ribosomal protein uL23 family. In terms of assembly, part of the 50S ribosomal subunit. Contacts protein L29, and trigger factor when it is bound to the ribosome.

In terms of biological role, one of the early assembly proteins it binds 23S rRNA. One of the proteins that surrounds the polypeptide exit tunnel on the outside of the ribosome. Forms the main docking site for trigger factor binding to the ribosome. In Borreliella afzelii (strain PKo) (Borrelia afzelii), this protein is Large ribosomal subunit protein uL23.